A 241-amino-acid chain; its full sequence is MSNKNVNVRKSQEITFCLLAGILMFMAMMVAGRAEAGVALGATRVIYPAGQKQEQLAVTNNDENSTYLIQSWVENADGVKDGRFIVTPPLFAMKGKKENTLRILDATNNQLPQDRESLFWMNVKAIPSMDKSKLTENTLQLAIISRIKLYYRPAKLALPPDQAAEKLRFRRSANSLTLINPTPYYLTVTELNAGTRVLENALVPPMGESTVKLPSDAGSNITYRTINDYGALTPKMTGVME.

Residues 1–36 (MSNKNVNVRKSQEITFCLLAGILMFMAMMVAGRAEA) form the signal peptide.

This sequence belongs to the periplasmic pilus chaperone family.

The protein resides in the periplasm. Functionally, required for the biogenesis of type 1 fimbriae. Binds and interact with FimH. The sequence is that of Chaperone protein FimC (fimC) from Escherichia coli (strain K12).